We begin with the raw amino-acid sequence, 1754 residues long: Collagen alpha-1(XVIII) chain (1754 aa).

The signal sequence occupies residues 1–23 (MAPYPCGCHILLLLFCCLAAARA). The interval 42-104 (ATTIPEPQGP…TSAESPDAPE (63 aa)) is disordered. Polar residues predominate over residues 57-73 (TADTTTHVTPRNGSTEP). N-linked (GlcNAc...) asparagine glycans are attached at residues Asn68, Asn129, and Asn164. The segment at 152-256 (LALAGPSSTP…APSQQLQRPD (105 aa)) is disordered. A compositionally biased stretch (polar residues) spans 157-169 (PSSTPQENGTTLW). Positions 215-253 (SGRASLSSLLGGAPPWGSLQDPDSQGLSPAAAAPSQQLQ) are enriched in low complexity. The 118-residue stretch at 329 to 446 (APAGRCLPLP…TQEDGYCVLI (118 aa)) folds into the FZ domain. 5 disulfides stabilise this stretch: Cys334/Cys397, Cys344/Cys390, Cys381/Cys419, Cys408/Cys443, and Cys412/Cys432. Residues 456–644 (EVGLLQLLGD…IAELKVRRDP (189 aa)) form the Laminin G-like domain. Residues 645 to 751 (QVSPMHCLDE…RTPGGRVKEG (107 aa)) form a nonhelical region 1 (NC1) region. The tract at residues 645 to 1443 (QVSPMHCLDE…GPPGTMGASS (799 aa)) is disordered. Basic and acidic residues predominate over residues 672–681 (DARELLREET). At Thr696 the chain carries Phosphothreonine. A compositionally biased stretch (polar residues) spans 717-738 (QTTVASLGAQTLPGSDSVSTWD). Residues 752-785 (GLKGQKGEPGVPGPPGRAGPPGSPCLPGPPGLPC) are triple-helical region 1 (COL1). A compositionally biased stretch (pro residues) spans 762–789 (VPGPPGRAGPPGSPCLPGPPGLPCPVSP). The segment at 786 to 795 (PVSPLGPAGP) is nonhelical region 2 (NC2). A triple-helical region 2 (COL2) region spans residues 796 to 875 (ALQTVPGPQG…QGPPGPPGPS (80 aa)). The span at 815-831 (TPGRDGEPGDPGEDGKP) shows a compositional bias: basic and acidic residues. Residues 833-846 (DTGPQGFPGTPGDV) show a composition bias toward low complexity. Pro residues predominate over residues 862-874 (PPGPQGPPGPPGP). Positions 876 to 899 (FRHDKLTFIDMEGSGFGGDLEALR) are nonhelical region 3 (NC3). The O-linked (Xyl...) (chondroitin sulfate) serine glycan is linked to Ser889. Positions 900-1021 (GPRGFPGPPG…PGPPGPPGPG (122 aa)) are triple-helical region 3 (COL3). Pro residues predominate over residues 904–914 (FPGPPGPPGVP). A glycan (N-linked (GlcNAc...) asparagine) is linked at Asn926. Positions 930–942 (VPGPAGLPGVPGR) are enriched in low complexity. A compositionally biased stretch (pro residues) spans 946-961 (PGFPGLPGPPGPPGRE). Positions 976 to 1003 (AGAPGHKGSKGAPGPAGARGESGLAGAP) are enriched in low complexity. A compositionally biased stretch (pro residues) spans 1005-1021 (PAGPPGPPGPPGPPGPG). Residues 1022 to 1044 (LPAGFDDMEGSGGPFWSTARSAD) are nonhelical region 4 (NC4). The segment at 1045 to 1127 (GPQGPPGLPG…PGPPGPPGPV (83 aa)) is triple-helical region 4 (COL4). Residues 1053-1065 (PGLKGDPGVPGLP) are compositionally biased toward low complexity. Basic and acidic residues predominate over residues 1095 to 1109 (KGDRGSRGEKGDPGK). Pro residues predominate over residues 1117-1126 (LPGPPGPPGP). The tract at residues 1128-1141 (VYVSEQDGSVLSVP) is nonhelical region 5 (NC5). The span at 1141-1153 (PGPEGRPGFAGFP) shows a compositional bias: low complexity. The tract at residues 1142-1183 (GPEGRPGFAGFPGPAGPKGNLGSKGERGSPGPKGEKGEPGSI) is triple-helical region 5 (COL5). Positions 1184 to 1196 (FSPDGGALGPAQK) are nonhelical region 6 (NC6). A triple-helical region 6 (COL6) region spans residues 1197–1269 (GAKGEPGFRG…PGPPGPPGTP (73 aa)). Residues 1254-1268 (PGPPGPPGPPGPPGT) show a composition bias toward pro residues. The nonhelical region 7 (NC7) stretch occupies residues 1270–1279 (VYDSNVFAES). The tract at residues 1280–1312 (SRPGPPGLPGNQGPPGPKGAKGEVGPPGPPGQF) is triple-helical region 7 (COL7). Residues 1282–1296 (PGPPGLPGNQGPPGP) are compositionally biased toward pro residues. Residues 1313–1324 (PFDFLQLEAEMK) are nonhelical region 8 (NC8). Residues 1321 to 1341 (AEMKGEKGDRGDAGQKGERGE) show a composition bias toward basic and acidic residues. The interval 1325 to 1346 (GEKGDRGDAGQKGERGEPGGGG) is triple-helical region 8 (COL8). The Cell attachment site signature appears at 1330–1332 (RGD). The nonhelical region 9 (NC9) stretch occupies residues 1347-1353 (FFGSSLP). Pro residues-rich tracts occupy residues 1353–1365 (PGPP…PGPR), 1401–1414 (PPGP…PSFP), and 1424–1436 (PGPP…PGPP). The tract at residues 1354 to 1411 (GPPGPPGPPGPRGYPGIPGPKGESIRGQPGPPGPQGPPGIGYEGRQGPPGPPGPPGPP) is triple-helical region 9 (COL9). The tract at residues 1412 to 1424 (SFPGPHRQTISVP) is nonhelical region 10 (NC10). The tract at residues 1425 to 1442 (GPPGPPGPPGPPGTMGAS) is triple-helical region 10 (COL10). The tract at residues 1443 to 1754 (SGVRLWATRQ…IENSFMTASK (312 aa)) is nonhelical region 11 (NC11). Residues 1456 to 1501 (GQVHEVPEGWLIFVAEQEELYVRVQNGFRKVQLEARTPLPRGTDNE) are non-collagenous domain 1 association domain. Residues 1502–1571 (VAALQPPVVQ…RPARPTSPPA (70 aa)) form a non-collagenous domain 1 hinge region region. The tract at residues 1511–1556 (QLHDSNPYPRREHPHPTARPWRADDILASPPRLPEPQPYPGAPHHS) is disordered. Positions 1519 to 1535 (PRREHPHPTARPWRADD) are enriched in basic and acidic residues. Pro residues predominate over residues 1541–1551 (PRLPEPQPYPG). Residue Thr1567 is glycosylated (O-linked (GalNAc...) threonine). 4 residues coordinate Zn(2+): His1572, His1574, His1582, and Asp1647. 2 cysteine pairs are disulfide-bonded: Cys1604–Cys1744 and Cys1706–Cys1736.

It belongs to the multiplexin collagen family. As to quaternary structure, forms homotrimers. Recombinant non-collagenous domain 1 has stronger affinity to NID1, HSPG2 and laminin-1:NID1 complex and lower affinity to FBLN1 and FBLN2 than endostatin. In terms of assembly, monomeric. Interacts with KDR/VEGFR2. Interacts with the ITGA5:ITGB1 complex. Interacts with NID1, HSPG2, laminin-1:NID1 complex, FBLN1 and FBLN2. In terms of processing, prolines at the third position of the tripeptide repeating unit (G-X-Y) of the triple-helical regions are hydroxylated. Post-translationally, circulating endostatins are found as sialoglycoprotein and asialoglycoprotein structures. Undergoes proteolytic processing by CTSL/cathepsin-L and elastase-like proteases to generate both non-collagenous domain 1 trimers and endostatin monomers. In tissue extracts (brain, skeletal muscle, heart, kidney, testis and liver) predominantly bands of approximately 38 kDa are detected; recombinant non-collagenous domain 1 shows similar mobility. In vitro, several proteolytic cleavage sites in the non-collagenous domain 1 hinge region generating different endostatin-like peptides are reported. Detected in placenta (at protein level). Present in multiple organs with highest levels in liver, lung and kidney.

It is found in the secreted. The protein localises to the extracellular space. Its subcellular location is the extracellular matrix. It localises to the basement membrane. Functionally, probably plays a major role in determining the retinal structure as well as in the closure of the neural tube. Its function is as follows. May regulate extracellular matrix-dependent motility and morphogenesis of endothelial and non-endothelial cells; the function requires homotrimerization and implicates MAPK signaling. Potently inhibits endothelial cell proliferation and angiogenesis. May inhibit angiogenesis by binding to the heparan sulfate proteoglycans involved in growth factor signaling. Inhibits VEGFA-induced endothelial cell proliferation and migration. Seems to inhibit VEGFA-mediated signaling by blocking the interaction of VEGFA to its receptor KDR/VEGFR2. Modulates endothelial cell migration in an integrin-dependent manner implicating integrin ITGA5:ITGB1 and to a lesser extent ITGAV:ITGB3 and ITGAV:ITGB5. May negatively regulate the activity of homotrimeric non-collagenous domain 1. The polypeptide is Collagen alpha-1(XVIII) chain (Homo sapiens (Human)).